Here is a 249-residue protein sequence, read N- to C-terminus: ATP synthase subunit a, chloroplastic (249 aa).

The next 5 membrane-spanning stretches (helical) occupy residues 40-60 (QVLI…VLAI), 97-117 (VPFI…GALL), 136-156 (INTT…AGLS), 201-221 (LVVV…VMFL), and 222-242 (GLFT…AYIG).

The protein belongs to the ATPase A chain family. In terms of assembly, F-type ATPases have 2 components, CF(1) - the catalytic core - and CF(0) - the membrane proton channel. CF(1) has five subunits: alpha(3), beta(3), gamma(1), delta(1), epsilon(1). CF(0) has four main subunits: a, b, b' and c.

It is found in the plastid. The protein localises to the chloroplast thylakoid membrane. Key component of the proton channel; it plays a direct role in the translocation of protons across the membrane. This Olimarabidopsis pumila (Dwarf rocket) protein is ATP synthase subunit a, chloroplastic.